A 395-amino-acid polypeptide reads, in one-letter code: MATFTDAEIDELFETSGTVIDNIITAQGKSAETVGRSAIPHGKTKALSAAWEKHGSIQPPASQDTPDRQDRSDKQPSTPEQATPHDSPPATSADQPPTQATDEAVDTQLRTGASNSLLLMLDKLSNKSSNAKKGLWSSPQEGNHQRPTQQQGSQPSRGNSQERPQNQVKAAPGNQGTDANTAYHGQWEESQLSAGATPHALRSRQSQDNTLVSADHVQPPVDFVQAMMSMMEAISQRVSKVDYQLDLVLKQTSSIPMMRSEIQQLKTSVAVMEANLGMMKILDPGCANVSSLSDLRAVARSHPVLVSGPGDPSPYVTQGGEMALNKLSQPVPHPSELIKSATACGPDIGVEKDTVRALIMSRPMHPSSSAKLLSKLDAAGSIEEIRKIKRLALNG.

2 disordered regions span residues 29–104 (KSAE…TDEA) and 129–214 (SNAK…LVSA). Positions 65 to 74 (TPDRQDRSDK) are enriched in basic and acidic residues. Polar residues-rich tracts occupy residues 89–101 (PATS…TQAT), 129–180 (SNAK…TDAN), and 203–212 (SRQSQDNTLV). The segment at 222–285 (DFVQAMMSMM…LGMMKILDPG (64 aa)) is multimerization.

Belongs to the rubulavirus/avulavirus P protein family. As to quaternary structure, homotetramer. Interacts (via multimerization domain) with polymerase L; this interaction forms the polymerase L-P complex. Interacts (via N-terminus) with N0 (via Ncore); this interaction allows P to chaperon N0 to avoid N polymerization before encapsidation. Interacts (via C-terminus) with N-RNA template; this interaction positions the polymerase on the template for both transcription and replication.

Its function is as follows. Essential cofactor of the RNA polymerase L that plays a central role in the transcription and replication by forming the polymerase complex with RNA polymerase L and recruiting L to the genomic N-RNA template for RNA synthesis. Also plays a central role in the encapsidation of nascent RNA chains by forming the encapsidation complex with the nucleocapsid protein N (N-P complex). Acts as a chaperone for newly synthesized free N protein, so-called N0, allowing encapsidation of nascent RNA chains during replication. The nucleoprotein protein N prevents excessive phosphorylation of P, which leads to down-regulation of viral transcription/ replication. Participates, together with N, in the formation of viral factories (viroplasms), which are large inclusions in the host cytoplasm where replication takes place. The sequence is that of Phosphoprotein (P) from Gallus gallus (Chicken).